Reading from the N-terminus, the 72-residue chain is Large ribosomal subunit protein bL31 (72 aa).

Zn(2+) contacts are provided by cysteine 16, cysteine 18, cysteine 38, and cysteine 41.

It belongs to the bacterial ribosomal protein bL31 family. Type A subfamily. Part of the 50S ribosomal subunit. It depends on Zn(2+) as a cofactor.

Binds the 23S rRNA. The protein is Large ribosomal subunit protein bL31 of Vibrio atlanticus (strain LGP32) (Vibrio splendidus (strain Mel32)).